The chain runs to 175 residues: Short chain dehydrogenase/reductase dpmpG (175 aa).

NADP(+)-binding residues include isoleucine 18, aspartate 71, asparagine 98, and lysine 132.

It belongs to the short-chain dehydrogenases/reductases (SDR) family.

Its pathway is secondary metabolite biosynthesis; terpenoid biosynthesis. In terms of biological role, short chain dehydrogenase/reductase; part of the gene cluster that mediates the biosynthesis of diterpenoid pyrones. The first step of the pathway is the synthesis of the alpha-pyrone moiety by the polyketide synthase dpmpA via condensation of one acetyl-CoA starter unit with 3 malonyl-CoA units and 2 methylations. The alpha-pyrone is then combined with geranylgeranyl pyrophosphate (GGPP) formed by the GGPP synthase dpmpD through the action of the prenyltransferase dpmpC to yield a linear alpha-pyrone diterpenoid. Subsequent steps in the diterpenoid pyrone biosynthetic pathway involve the decalin core formation, which is initiated by the epoxidation of the C10-C11 olefin by the FAD-dependent oxidoreductase dpmpE, and is followed by a cyclization cascade catalyzed by the terpene cyclase dpmpB. The short chain dehydrogenase/reductase dpmpG then oxidizes the 8S hydroxy group to a ketone and the short chain dehydrogenase/reductase dpmpH reduces the ketone to the 8R hydroxy group to yield higginsianin B. Higginsianin B is further methylated by the methyltransferase dpmpI to produce the intermediate named FDDP B. The cytochrome P450 monooxygenase dpmpJ then oxidizes the C-26 methyl to primary alcohol, producing the final diterpenoid pyrone with a C-26 primary alcohol on the gamma-pyrone moiety named FDDP C. This chain is Short chain dehydrogenase/reductase dpmpG, found in Macrophomina phaseolina (strain MS6) (Charcoal rot fungus).